A 162-amino-acid chain; its full sequence is uncharacterized protein (162 aa).

Pentapeptide repeat domains lie at 33-72 (ASLI…NMTE), 73-112 (VCLI…DLRK), and 113-152 (ANLS…YISD).

This is an uncharacterized protein from Synechocystis sp. (strain ATCC 27184 / PCC 6803 / Kazusa).